The chain runs to 277 residues: Large ribosomal subunit protein uL2 (277 aa).

The tract at residues T219–K277 is disordered.

This sequence belongs to the universal ribosomal protein uL2 family. Part of the 50S ribosomal subunit. Forms a bridge to the 30S subunit in the 70S ribosome.

In terms of biological role, one of the primary rRNA binding proteins. Required for association of the 30S and 50S subunits to form the 70S ribosome, for tRNA binding and peptide bond formation. It has been suggested to have peptidyltransferase activity; this is somewhat controversial. Makes several contacts with the 16S rRNA in the 70S ribosome. The sequence is that of Large ribosomal subunit protein uL2 from Streptococcus suis (strain 98HAH33).